An 83-amino-acid chain; its full sequence is Cytochrome b559 subunit alpha (83 aa).

A helical membrane pass occupies residues valine 21–tryptophan 35. Histidine 23 provides a ligand contact to heme.

The protein belongs to the PsbE/PsbF family. In terms of assembly, heterodimer of an alpha subunit and a beta subunit. PSII is composed of 1 copy each of membrane proteins PsbA, PsbB, PsbC, PsbD, PsbE, PsbF, PsbH, PsbI, PsbJ, PsbK, PsbL, PsbM, PsbT, PsbX, PsbY, PsbZ, Psb30/Ycf12, at least 3 peripheral proteins of the oxygen-evolving complex and a large number of cofactors. It forms dimeric complexes. Requires heme b as cofactor.

Its subcellular location is the plastid. The protein localises to the chloroplast thylakoid membrane. This b-type cytochrome is tightly associated with the reaction center of photosystem II (PSII). PSII is a light-driven water:plastoquinone oxidoreductase that uses light energy to abstract electrons from H(2)O, generating O(2) and a proton gradient subsequently used for ATP formation. It consists of a core antenna complex that captures photons, and an electron transfer chain that converts photonic excitation into a charge separation. This chain is Cytochrome b559 subunit alpha, found in Citrus sinensis (Sweet orange).